The chain runs to 698 residues: Cytoplasmic polyadenylation element-binding protein 3 (698 aa).

Residues 1–11 (MQDDLLMDKSK) show a composition bias toward basic and acidic residues. Disordered stretches follow at residues 1–114 (MQDD…WSTG) and 158–208 (AQTQ…SAAA). Over residues 13 to 28 (QPQPQQQQRQQQQPQP) the composition is skewed to low complexity. Over residues 29 to 44 (ESSVSEAPSTPLSSET) the composition is skewed to polar residues. Residues 87–96 (PQQPPPPQEP) are compositionally biased toward pro residues. The segment covering 103–114 (LSPSFGSTWSTG) has biased composition (polar residues). Residues 165-185 (QPPPPAPAPQPAQPAQPPQAQ) show a composition bias toward pro residues. Over residues 186–208 (PPQQRRSPASPSQAPYAQRSAAA) the composition is skewed to low complexity. Serine 192, serine 195, and serine 290 each carry phosphoserine. Arginine 308 is modified (asymmetric dimethylarginine). RRM domains follow at residues 441-532 (RKVF…PWNL) and 549-631 (KTIF…PYVL).

It belongs to the RRM CPEB family. As to quaternary structure, following synaptic activity, forms amyloid-like oligomers. Aggregation requires an intact actin cytoskeleton. Interacts with STAT5B; this inhibits STAT5B-mediated transcriptional activation. Interacts with E3 ubiquitin-protein ligase NEURL1; this leads to monoubiquitination and activation of CPEB3. Interacts with CAPN2; this leads to cleavage of CPEB3. Interacts (via C-terminal RNA-binding region) with TOB1; TOB1 also binds CNOT7/CAF1 and recruits it to CPEB3 to form a ternary complex. Interacts with SUMO-conjugating enzyme UBC9. Interacts with IPO5; the interaction is enhanced in a RAN-regulated manner following neuronal stimulation and mediates CPEB3 nuclear import. Interacts with exportin XPO1/CRM1. Activated by NEURL1-mediated monoubiquitination, resulting in the growth of new dendritic spines and increased levels of GRIA1 and GRIA2. NEURL1-mediated monoubiquitination facilitates synaptic plasticity and hippocampal-dependent memory storage. Post-translationally, under basal unstimulated conditions when CPEB3 is mainly unaggregated, sumoylated and acts as a translational repressor. Following neuronal stimulation, becomes desumoylated and aggregated which is required for the translation of mRNA targets and for dendritic filopodia formation. In terms of processing, following neuronal stimulation, cleaved by CAPN2 which abolishes its translational repressor activity, leading to translation of CPEB3 target mRNAs. Phosphorylation is enhanced by neuronal stimulation.

It is found in the cytoplasm. The protein resides in the nucleus. The protein localises to the synapse. It localises to the cell projection. Its subcellular location is the dendrite. It is found in the postsynaptic density. Its function is as follows. Sequence-specific RNA-binding protein which acts as a translational repressor in the basal unstimulated state but, following neuronal stimulation, acts as a translational activator. In contrast to CPEB1, does not bind to the cytoplasmic polyadenylation element (CPE), a uridine-rich sequence element within the mRNA 3'-UTR, but binds to a U-rich loop within a stem-loop structure. Required for the consolidation and maintenance of hippocampal-based long term memory. In the basal state, binds to the mRNA 3'-UTR of the glutamate receptors GRIA2/GLUR2 mRNA and negatively regulates their translation. Also represses the translation of DLG4, GRIN1, GRIN2A and GRIN2B. When activated, acts as a translational activator of GRIA1 and GRIA2. In the basal state, suppresses SUMO2 translation but activates it following neuronal stimulation. Binds to the 3'-UTR of TRPV1 mRNA and represses TRPV1 translation which is required to maintain normal thermoception. Binds actin mRNA, leading to actin translational repression in the basal state and to translational activation following neuronal stimulation. Negatively regulates target mRNA levels by binding to TOB1 which recruits CNOT7/CAF1 to a ternary complex and this leads to target mRNA deadenylation and decay. In addition to its role in translation, binds to and inhibits the transcriptional activation activity of STAT5B without affecting its dimerization or DNA-binding activity. This, in turn, represses transcription of the STAT5B target gene EGFR which has been shown to play a role in enhancing learning and memory performance. In contrast to CPEB1, CPEB2 and CPEB4, not required for cell cycle progression. The polypeptide is Cytoplasmic polyadenylation element-binding protein 3 (CPEB3) (Homo sapiens (Human)).